The primary structure comprises 154 residues: Large ribosomal subunit protein uL23 (154 aa).

Belongs to the universal ribosomal protein uL23 family.

Its function is as follows. This protein binds to a specific region on the 26S rRNA. The protein is Large ribosomal subunit protein uL23 (RPL23A) of Fritillaria agrestis (Stinkbells).